The sequence spans 738 residues: Elongation factor G, mitochondrial (738 aa).

Residues 1–20 (MCIGPAPTPETEEELPPSPQ) form a disordered region. Residues 32-320 (RFQRNIGVSA…GVCAYLPNPA (289 aa)) enclose the tr-type G domain. Residues 41–48 (AHIDSGKT), 118–122 (DTPGH), and 172–175 (NKMD) each bind GTP.

Belongs to the TRAFAC class translation factor GTPase superfamily. Classic translation factor GTPase family. EF-G/EF-2 subfamily.

The protein localises to the mitochondrion. It functions in the pathway protein biosynthesis; polypeptide chain elongation. Functionally, mitochondrial GTPase that catalyzes the GTP-dependent ribosomal translocation step during translation elongation. During this step, the ribosome changes from the pre-translocational (PRE) to the post-translocational (POST) state as the newly formed A-site-bound peptidyl-tRNA and P-site-bound deacylated tRNA move to the P and E sites, respectively. Catalyzes the coordinated movement of the two tRNA molecules, the mRNA and conformational changes in the ribosome. This is Elongation factor G, mitochondrial from Laccaria bicolor (strain S238N-H82 / ATCC MYA-4686) (Bicoloured deceiver).